Here is a 281-residue protein sequence, read N- to C-terminus: 4-diphosphocytidyl-2-C-methyl-D-erythritol kinase (281 aa).

K15 is an active-site residue. An ATP-binding site is contributed by 98 to 108; the sequence is PTGAGLGGGSS. D140 is an active-site residue.

This sequence belongs to the GHMP kinase family. IspE subfamily.

The enzyme catalyses 4-CDP-2-C-methyl-D-erythritol + ATP = 4-CDP-2-C-methyl-D-erythritol 2-phosphate + ADP + H(+). It functions in the pathway isoprenoid biosynthesis; isopentenyl diphosphate biosynthesis via DXP pathway; isopentenyl diphosphate from 1-deoxy-D-xylulose 5-phosphate: step 3/6. In terms of biological role, catalyzes the phosphorylation of the position 2 hydroxy group of 4-diphosphocytidyl-2C-methyl-D-erythritol. This chain is 4-diphosphocytidyl-2-C-methyl-D-erythritol kinase, found in Neisseria meningitidis serogroup B (strain ATCC BAA-335 / MC58).